Reading from the N-terminus, the 542-residue chain is Anaerobic glycerol-3-phosphate dehydrogenase subunit A (542 aa).

10 to 38 (DVIIIGGGATGAGIARDCALRGLRVILVE) is an FAD binding site.

This sequence belongs to the FAD-dependent glycerol-3-phosphate dehydrogenase family. As to quaternary structure, composed of a catalytic GlpA/B dimer and of membrane bound GlpC. Requires FAD as cofactor. The cofactor is FMN.

The protein resides in the cell inner membrane. It catalyses the reaction a quinone + sn-glycerol 3-phosphate = dihydroxyacetone phosphate + a quinol. Its pathway is polyol metabolism; glycerol degradation via glycerol kinase pathway; glycerone phosphate from sn-glycerol 3-phosphate (anaerobic route): step 1/1. Its function is as follows. Conversion of glycerol 3-phosphate to dihydroxyacetone. Uses fumarate or nitrate as electron acceptor. In Escherichia coli O157:H7, this protein is Anaerobic glycerol-3-phosphate dehydrogenase subunit A (glpA).